The primary structure comprises 78 residues: Large ribosomal subunit protein bL28 (78 aa).

The protein belongs to the bacterial ribosomal protein bL28 family.

The sequence is that of Large ribosomal subunit protein bL28 from Hydrogenovibrio crunogenus (strain DSM 25203 / XCL-2) (Thiomicrospira crunogena).